Consider the following 356-residue polypeptide: Transcription factor ATOH1 (356 aa).

Basic and acidic residues predominate over residues 1–21; it reads MSRLLHAEEWAEVKELGDHHR. Disordered regions lie at residues 1-56 and 92-125; these read MSRL…PELS and SEAA…GPVK. Residues 26–40 are compositionally biased toward pro residues; it reads HHLPQPPPPPPPQPP. Residues 96–109 show a composition bias toward basic and acidic residues; the sequence is APRDEVDGRGELVR. Low complexity predominate over residues 110-124; the sequence is RSSGGASSSKSPGPV. A bHLH domain is found at 161-213; it reads QRRLAANARERRRMHGLNHAFDQLRNVIPSFNNDKKLSKYETLQMAQIYINAL. 2 disordered regions span residues 218 to 279 and 314 to 356; these read QTPS…TRFS and SPSL…DEAS. The span at 252–266 shows a compositional bias: low complexity; that stretch reads NATAAGAQQASGGSQ. A compositionally biased stretch (basic and acidic residues) spans 337–356; the sequence is HRSDGEFSPHSHYSDSDEAS.

Efficient DNA binding requires dimerization with another bHLH protein.

The protein resides in the nucleus. Its function is as follows. Transcriptional regulator. Activates E box-dependent transcription in collaboration with TCF3/E47, but the activity is completely antagonized by the negative regulator of neurogenesis HES1. Plays a role in the differentiation of subsets of neural cells by activating E box-dependent transcription. This is Transcription factor ATOH1 from Pan troglodytes (Chimpanzee).